A 269-amino-acid polypeptide reads, in one-letter code: Phosphonoacetaldehyde hydrolase (269 aa).

D10 functions as the Nucleophile in the catalytic mechanism. Positions 10 and 12 each coordinate Mg(2+). The active-site Schiff-base intermediate with substrate is K52. Residue D186 coordinates Mg(2+).

Belongs to the HAD-like hydrolase superfamily. PhnX family. As to quaternary structure, homodimer. The cofactor is Mg(2+).

The enzyme catalyses phosphonoacetaldehyde + H2O = acetaldehyde + phosphate + H(+). Its function is as follows. Involved in phosphonate degradation. The polypeptide is Phosphonoacetaldehyde hydrolase (Salmonella typhi).